We begin with the raw amino-acid sequence, 374 residues long: MTEPAILVLEDGTVFEGDAVGANGLSVGEVVFNTSLTGYQEVLTDPSYAYQLVTLTYPHIGNTGCTDQDDEANKVWAAGLIVRDVPRRPSNWRSQISLSDWLAARGVVAIAGIDTRKLTRILREKGAQHGALMAGEIDVDRAQDAARQFTGIKGMDLAKVVSTKQAYSWYEGQLDLDRNEWKRAAPQYKVVAYDYGVKLNILRMLAERGCDLTVVPAQTPVDEVLALCPDGVFLSNGPGDPEPCDYAVAAIKTFIMRRVPIFGICLGHQLLAQTVGAKVVKMRHGHHGANHPVQDLRSGRVMITSQNHGFAVDEATLPSNVRVTHRSLFDGTNQGIELLDVPAFSFQGHPEASPGPHDVDVLFDRFITMMAAQS.

Residues 1 to 186 (MTEPAILVLE…DRNEWKRAAP (186 aa)) are CPSase. L-glutamine contacts are provided by S47, G237, and G239. Residues 189-374 (KVVAYDYGVK…RFITMMAAQS (186 aa)) enclose the Glutamine amidotransferase type-1 domain. C265 serves as the catalytic Nucleophile. Positions 266, 269, 307, 309, and 310 each coordinate L-glutamine. Residues H349 and E351 contribute to the active site.

Belongs to the CarA family. As to quaternary structure, composed of two chains; the small (or glutamine) chain promotes the hydrolysis of glutamine to ammonia, which is used by the large (or ammonia) chain to synthesize carbamoyl phosphate. Tetramer of heterodimers (alpha,beta)4.

The catalysed reaction is hydrogencarbonate + L-glutamine + 2 ATP + H2O = carbamoyl phosphate + L-glutamate + 2 ADP + phosphate + 2 H(+). The enzyme catalyses L-glutamine + H2O = L-glutamate + NH4(+). Its pathway is amino-acid biosynthesis; L-arginine biosynthesis; carbamoyl phosphate from bicarbonate: step 1/1. The protein operates within pyrimidine metabolism; UMP biosynthesis via de novo pathway; (S)-dihydroorotate from bicarbonate: step 1/3. Small subunit of the glutamine-dependent carbamoyl phosphate synthetase (CPSase). CPSase catalyzes the formation of carbamoyl phosphate from the ammonia moiety of glutamine, carbonate, and phosphate donated by ATP, constituting the first step of 2 biosynthetic pathways, one leading to arginine and/or urea and the other to pyrimidine nucleotides. The small subunit (glutamine amidotransferase) binds and cleaves glutamine to supply the large subunit with the substrate ammonia. This Xylella fastidiosa (strain 9a5c) protein is Carbamoyl phosphate synthase small chain.